A 347-amino-acid chain; its full sequence is Uroporphyrinogen decarboxylase (347 aa).

Substrate-binding positions include 24-28 (RQAGR), D74, Y145, S200, and H315.

Belongs to the uroporphyrinogen decarboxylase family. Homodimer.

The protein localises to the cytoplasm. The catalysed reaction is uroporphyrinogen III + 4 H(+) = coproporphyrinogen III + 4 CO2. It functions in the pathway porphyrin-containing compound metabolism; protoporphyrin-IX biosynthesis; coproporphyrinogen-III from 5-aminolevulinate: step 4/4. Functionally, catalyzes the decarboxylation of four acetate groups of uroporphyrinogen-III to yield coproporphyrinogen-III. The polypeptide is Uroporphyrinogen decarboxylase (Hydrogenobaculum sp. (strain Y04AAS1)).